The primary structure comprises 297 residues: Nicotinate-nucleotide pyrophosphorylase [carboxylating] (297 aa).

Residues 8 to 12 are important for hexamer formation; that stretch reads LLLPP. Residues R102, 138 to 139, 160 to 161, K171, E201, D222, 248 to 250, and G270 each bind quinolinate; these read RK, HR, and SGG.

Belongs to the NadC/ModD family. Hexamer formed by 3 homodimers.

The enzyme catalyses nicotinate beta-D-ribonucleotide + CO2 + diphosphate = quinolinate + 5-phospho-alpha-D-ribose 1-diphosphate + 2 H(+). The protein operates within cofactor biosynthesis; NAD(+) biosynthesis; nicotinate D-ribonucleotide from quinolinate: step 1/1. Activity toward QA is slightly repressed by phosphoribosylpyrophosphate (PRPP) in both a competitive and a non-competitive manner. Competitively inhibited by phthalic acid (PHT). Functionally, involved in the catabolism of quinolinic acid (QA). This Homo sapiens (Human) protein is Nicotinate-nucleotide pyrophosphorylase [carboxylating] (QPRT).